Here is a 248-residue protein sequence, read N- to C-terminus: Probable transcriptional regulatory protein RHOS4_22610 (248 aa).

Residues 1–21 (MAGHSKWANIQHRKGKQDKLR) form a disordered region.

Belongs to the TACO1 family.

The protein localises to the cytoplasm. The protein is Probable transcriptional regulatory protein RHOS4_22610 of Cereibacter sphaeroides (strain ATCC 17023 / DSM 158 / JCM 6121 / CCUG 31486 / LMG 2827 / NBRC 12203 / NCIMB 8253 / ATH 2.4.1.) (Rhodobacter sphaeroides).